The chain runs to 61 residues: Small ribosomal subunit protein uS14 (61 aa).

Zn(2+) is bound by residues cysteine 24, cysteine 27, cysteine 40, and cysteine 43.

This sequence belongs to the universal ribosomal protein uS14 family. Zinc-binding uS14 subfamily. Part of the 30S ribosomal subunit. Contacts proteins S3 and S10. Zn(2+) serves as cofactor.

Functionally, binds 16S rRNA, required for the assembly of 30S particles and may also be responsible for determining the conformation of the 16S rRNA at the A site. This Sulfurimonas denitrificans (strain ATCC 33889 / DSM 1251) (Thiomicrospira denitrificans (strain ATCC 33889 / DSM 1251)) protein is Small ribosomal subunit protein uS14.